The chain runs to 130 residues: DNA-binding protein HU (130 aa).

The protein belongs to the bacterial histone-like protein family.

In terms of biological role, histone-like DNA-binding protein which is capable of wrapping DNA to stabilize it, and thus to prevent its denaturation under extreme environmental conditions. In Ureaplasma parvum serovar 3 (strain ATCC 700970), this protein is DNA-binding protein HU (hup).